A 190-amino-acid chain; its full sequence is uncharacterized protein (190 aa).

A Macro domain is found at 1-185 (MITMFKIVRG…LALETIGLGD (185 aa)).

This is an uncharacterized protein from Pyrococcus horikoshii (strain ATCC 700860 / DSM 12428 / JCM 9974 / NBRC 100139 / OT-3).